A 433-amino-acid polypeptide reads, in one-letter code: Actin-related protein 4 (433 aa).

The disordered stretch occupies residues 289-317 (GSDEEMNEEPSKPIEQTENNEVSQQDSSV). Residues 302–317 (IEQTENNEVSQQDSSV) are compositionally biased toward polar residues.

This sequence belongs to the actin family. ARP4 subfamily. As to quaternary structure, component of the NuA4 histone acetyltransferase complex, of the INO80 chromatin remodeling complex, and of the SWR1 chromatin remodeling complex.

It localises to the nucleus. Functionally, chromatin interaction component of the NuA4 histone acetyltransferase complex which is involved in transcriptional activation of selected genes principally by acetylation of nucleosomal histone H4 and H2A. The NuA4 complex is also involved in DNA repair. Is required for NuA4 complex integrity. Component of the SWR1 complex which mediates the ATP-dependent exchange of histone H2A for the H2A variant HZT1 leading to transcriptional regulation of selected genes by chromatin remodeling. Component of the INO80 complex which remodels chromatin by shifting nucleosomes and is involved in DNA repair. The sequence is that of Actin-related protein 4 (alp5) from Schizosaccharomyces pombe (strain 972 / ATCC 24843) (Fission yeast).